The chain runs to 335 residues: N-acetyl-gamma-glutamyl-phosphate reductase (335 aa).

The active site involves cysteine 147.

It belongs to the NAGSA dehydrogenase family. Type 1 subfamily.

The protein resides in the cytoplasm. The catalysed reaction is N-acetyl-L-glutamate 5-semialdehyde + phosphate + NADP(+) = N-acetyl-L-glutamyl 5-phosphate + NADPH + H(+). It functions in the pathway amino-acid biosynthesis; L-arginine biosynthesis; N(2)-acetyl-L-ornithine from L-glutamate: step 3/4. Catalyzes the NADPH-dependent reduction of N-acetyl-5-glutamyl phosphate to yield N-acetyl-L-glutamate 5-semialdehyde. In Campylobacter hominis (strain ATCC BAA-381 / DSM 21671 / CCUG 45161 / LMG 19568 / NCTC 13146 / CH001A), this protein is N-acetyl-gamma-glutamyl-phosphate reductase.